The following is a 378-amino-acid chain: Ribosomal RNA large subunit methyltransferase G (378 aa).

It belongs to the methyltransferase superfamily. RlmG family.

Its subcellular location is the cytoplasm. It catalyses the reaction guanosine(1835) in 23S rRNA + S-adenosyl-L-methionine = N(2)-methylguanosine(1835) in 23S rRNA + S-adenosyl-L-homocysteine + H(+). Its function is as follows. Specifically methylates the guanine in position 1835 (m2G1835) of 23S rRNA. The polypeptide is Ribosomal RNA large subunit methyltransferase G (Escherichia coli (strain ATCC 8739 / DSM 1576 / NBRC 3972 / NCIMB 8545 / WDCM 00012 / Crooks)).